A 69-amino-acid polypeptide reads, in one-letter code: Protein SlyX homolog (69 aa).

The protein belongs to the SlyX family.

The protein is Protein SlyX homolog of Maricaulis maris (strain MCS10) (Caulobacter maris).